Here is a 116-residue protein sequence, read N- to C-terminus: NADH-ubiquinone oxidoreductase chain 3 (116 aa).

3 helical membrane-spanning segments follow: residues 8–28, 56–76, and 87–107; these read VAAT…LPSL, FFLV…LLPL, and ISLL…IYEW.

The protein belongs to the complex I subunit 3 family.

It localises to the mitochondrion membrane. It carries out the reaction a ubiquinone + NADH + 5 H(+)(in) = a ubiquinol + NAD(+) + 4 H(+)(out). In terms of biological role, core subunit of the mitochondrial membrane respiratory chain NADH dehydrogenase (Complex I) that is believed to belong to the minimal assembly required for catalysis. Complex I functions in the transfer of electrons from NADH to the respiratory chain. The immediate electron acceptor for the enzyme is believed to be ubiquinone. The chain is NADH-ubiquinone oxidoreductase chain 3 (MT-ND3) from Squalus acanthias (Spiny dogfish).